Consider the following 141-residue polypeptide: ATEDGKRAVPLKDYRNIGIMAHIDAGKTTTTERILFYTGRNYKIGEVHEGTATMDWMEQEQERGITITSAATTTFWDKHRINIIDTPGHVDFTLEVERALRVLDGAICLFDSVAGVEPQSETVWRQADRYGVPRICFVNKM.

Residues 12–141 (KDYRNIGIMA…VPRICFVNKM (130 aa)) enclose the tr-type G domain. GTP contacts are provided by residues 21 to 28 (AHIDAGKT) and 85 to 89 (DTPGH).

It belongs to the TRAFAC class translation factor GTPase superfamily. Classic translation factor GTPase family. EF-G/EF-2 subfamily.

It localises to the plastid. It is found in the chloroplast. Its pathway is protein biosynthesis; polypeptide chain elongation. Chloroplast-localized elongation factor EF-G involved in protein synthesis in plastids. Catalyzes the GTP-dependent ribosomal translocation step during translation elongation. During this step, the ribosome changes from the pre-translocational (PRE) to the post-translocational (POST) state as the newly formed A-site-bound peptidyl-tRNA and P-site-bound deacylated tRNA move to the P and E sites, respectively. Catalyzes the coordinated movement of the two tRNA molecules, the mRNA and conformational changes in the ribosome. In Pisum sativum (Garden pea), this protein is Elongation factor G, chloroplastic (fusA).